The chain runs to 142 residues: Large ribosomal subunit protein uL11 (142 aa).

The protein belongs to the universal ribosomal protein uL11 family. In terms of assembly, part of the ribosomal stalk of the 50S ribosomal subunit. Interacts with L10 and the large rRNA to form the base of the stalk. L10 forms an elongated spine to which L12 dimers bind in a sequential fashion forming a multimeric L10(L12)X complex. In terms of processing, one or more lysine residues are methylated.

In terms of biological role, forms part of the ribosomal stalk which helps the ribosome interact with GTP-bound translation factors. The sequence is that of Large ribosomal subunit protein uL11 from Vesicomyosocius okutanii subsp. Calyptogena okutanii (strain HA).